We begin with the raw amino-acid sequence, 701 residues long: Polyribonucleotide nucleotidyltransferase (701 aa).

Mg(2+) contacts are provided by D483 and D489. Residues 550 to 609 enclose the KH domain; sequence PRIYTLHIPTDKIRDVIGPGGKVIRGIIEQTGVKIDVEDDGTIHVASADEASANKAIQII. Positions 619–686 constitute an S1 motif domain; sequence GKTYLGKVVR…EGNKIKLSRK (68 aa).

The protein belongs to the polyribonucleotide nucleotidyltransferase family. Requires Mg(2+) as cofactor.

It is found in the cytoplasm. It catalyses the reaction RNA(n+1) + phosphate = RNA(n) + a ribonucleoside 5'-diphosphate. Involved in mRNA degradation. Catalyzes the phosphorolysis of single-stranded polyribonucleotides processively in the 3'- to 5'-direction. In Solibacter usitatus (strain Ellin6076), this protein is Polyribonucleotide nucleotidyltransferase.